The primary structure comprises 393 residues: Lipoyl synthase, mitochondrial (393 aa).

The [4Fe-4S] cluster site is built by cysteine 111, cysteine 116, cysteine 122, cysteine 142, cysteine 146, cysteine 149, and serine 357. In terms of domain architecture, Radical SAM core spans 127–346 (EHGTQTATIM…ETRGNELGFL (220 aa)).

Belongs to the radical SAM superfamily. Lipoyl synthase family. Requires [4Fe-4S] cluster as cofactor.

It localises to the mitochondrion. It catalyses the reaction [[Fe-S] cluster scaffold protein carrying a second [4Fe-4S](2+) cluster] + N(6)-octanoyl-L-lysyl-[protein] + 2 oxidized [2Fe-2S]-[ferredoxin] + 2 S-adenosyl-L-methionine + 4 H(+) = [[Fe-S] cluster scaffold protein] + N(6)-[(R)-dihydrolipoyl]-L-lysyl-[protein] + 4 Fe(3+) + 2 hydrogen sulfide + 2 5'-deoxyadenosine + 2 L-methionine + 2 reduced [2Fe-2S]-[ferredoxin]. The protein operates within protein modification; protein lipoylation via endogenous pathway; protein N(6)-(lipoyl)lysine from octanoyl-[acyl-carrier-protein]: step 2/2. Its function is as follows. Catalyzes the radical-mediated insertion of two sulfur atoms into the C-6 and C-8 positions of the octanoyl moiety bound to the lipoyl domains of lipoate-dependent enzymes, thereby converting the octanoylated domains into lipoylated derivatives. The chain is Lipoyl synthase, mitochondrial from Aedes aegypti (Yellowfever mosquito).